A 152-amino-acid chain; its full sequence is Large ribosomal subunit protein bL9 (152 aa).

This sequence belongs to the bacterial ribosomal protein bL9 family.

Its function is as follows. Binds to the 23S rRNA. The polypeptide is Large ribosomal subunit protein bL9 (Nocardia farcinica (strain IFM 10152)).